The chain runs to 444 residues: Glutamyl-tRNA reductase (444 aa).

Substrate contacts are provided by residues 49 to 52 (TCNR), serine 109, 114 to 116 (ETQ), and glutamine 120. Cysteine 50 acts as the Nucleophile in catalysis. NADP(+) is bound at residue 189–194 (GAGKMG).

The protein belongs to the glutamyl-tRNA reductase family. As to quaternary structure, homodimer.

The enzyme catalyses (S)-4-amino-5-oxopentanoate + tRNA(Glu) + NADP(+) = L-glutamyl-tRNA(Glu) + NADPH + H(+). It functions in the pathway porphyrin-containing compound metabolism; protoporphyrin-IX biosynthesis; 5-aminolevulinate from L-glutamyl-tRNA(Glu): step 1/2. In terms of biological role, catalyzes the NADPH-dependent reduction of glutamyl-tRNA(Glu) to glutamate 1-semialdehyde (GSA). In Bacillus cereus (strain G9842), this protein is Glutamyl-tRNA reductase.